A 451-amino-acid chain; its full sequence is UDP-N-acetylmuramoylalanine--D-glutamate ligase (451 aa).

120–126 (GSNGKTT) is a binding site for ATP.

This sequence belongs to the MurCDEF family.

The protein resides in the cytoplasm. The catalysed reaction is UDP-N-acetyl-alpha-D-muramoyl-L-alanine + D-glutamate + ATP = UDP-N-acetyl-alpha-D-muramoyl-L-alanyl-D-glutamate + ADP + phosphate + H(+). It participates in cell wall biogenesis; peptidoglycan biosynthesis. Functionally, cell wall formation. Catalyzes the addition of glutamate to the nucleotide precursor UDP-N-acetylmuramoyl-L-alanine (UMA). The sequence is that of UDP-N-acetylmuramoylalanine--D-glutamate ligase from Bacillus pumilus (strain SAFR-032).